The sequence spans 277 residues: Bifunctional protein FolD 1 (277 aa).

NADP(+) is bound by residues 162–164 (GDS) and S187.

It belongs to the tetrahydrofolate dehydrogenase/cyclohydrolase family. In terms of assembly, homodimer.

It catalyses the reaction (6R)-5,10-methylene-5,6,7,8-tetrahydrofolate + NADP(+) = (6R)-5,10-methenyltetrahydrofolate + NADPH. The enzyme catalyses (6R)-5,10-methenyltetrahydrofolate + H2O = (6R)-10-formyltetrahydrofolate + H(+). It participates in one-carbon metabolism; tetrahydrofolate interconversion. Functionally, catalyzes the oxidation of 5,10-methylenetetrahydrofolate to 5,10-methenyltetrahydrofolate and then the hydrolysis of 5,10-methenyltetrahydrofolate to 10-formyltetrahydrofolate. The protein is Bifunctional protein FolD 1 of Syntrophomonas wolfei subsp. wolfei (strain DSM 2245B / Goettingen).